The primary structure comprises 76 residues: Acyl carrier protein (76 aa).

Positions 1 to 76 constitute a Carrier domain; it reads MSIEERVKKI…SAIDYVQNNQ (76 aa). Serine 36 is subject to O-(pantetheine 4'-phosphoryl)serine.

The protein belongs to the acyl carrier protein (ACP) family. In terms of processing, 4'-phosphopantetheine is transferred from CoA to a specific serine of apo-ACP by AcpS. This modification is essential for activity because fatty acids are bound in thioester linkage to the sulfhydryl of the prosthetic group.

Its subcellular location is the cytoplasm. It functions in the pathway lipid metabolism; fatty acid biosynthesis. In terms of biological role, carrier of the growing fatty acid chain in fatty acid biosynthesis. This chain is Acyl carrier protein, found in Haemophilus influenzae (strain 86-028NP).